A 120-amino-acid chain; its full sequence is Aspartate 1-decarboxylase (120 aa).

Ser25 acts as the Schiff-base intermediate with substrate; via pyruvic acid in catalysis. Ser25 bears the Pyruvic acid (Ser) mark. Thr57 is a substrate binding site. Tyr58 (proton donor) is an active-site residue. 73 to 75 contacts substrate; it reads GAA.

The protein belongs to the PanD family. In terms of assembly, heterooctamer of four alpha and four beta subunits. Requires pyruvate as cofactor. Is synthesized initially as an inactive proenzyme, which is activated by self-cleavage at a specific serine bond to produce a beta-subunit with a hydroxyl group at its C-terminus and an alpha-subunit with a pyruvoyl group at its N-terminus.

Its subcellular location is the cytoplasm. The enzyme catalyses L-aspartate + H(+) = beta-alanine + CO2. It participates in cofactor biosynthesis; (R)-pantothenate biosynthesis; beta-alanine from L-aspartate: step 1/1. In terms of biological role, catalyzes the pyruvoyl-dependent decarboxylation of aspartate to produce beta-alanine. The chain is Aspartate 1-decarboxylase from Deinococcus geothermalis (strain DSM 11300 / CIP 105573 / AG-3a).